A 707-amino-acid chain; its full sequence is DNA-binding protein RFX2 (707 aa).

Residue serine 33 is modified to Phosphoserine. Residues 204 to 279 (HLQWLLDNYE…YHYYGIRLKP (76 aa)) constitute a DNA-binding region (RFX-type winged-helix). Residues 297–337 (QQPVHQKPRYRPAQKTDSLGESGSHSSLHSTPEQAMAAQSQ) form a disordered region. The span at 315–337 (LGESGSHSSLHSTPEQAMAAQSQ) shows a compositional bias: low complexity. Serine 420 carries the phosphoserine modification.

It belongs to the RFX family. As to quaternary structure, homodimer; probably only forms homodimers in testis. Heterodimer; heterodimerizes with RFX1 and RFX3.

Its subcellular location is the nucleus. It localises to the cytoplasm. Transcription factor that acts as a key regulator of spermatogenesis. Acts by regulating expression of genes required for the haploid phase during spermiogenesis, such as genes required for cilium assembly and function. Recognizes and binds the X-box, a regulatory motif with DNA sequence 5'-GTNRCC(0-3N)RGYAAC-3' present on promoters. Probably activates transcription of the testis-specific histone gene H1-6. In Bos taurus (Bovine), this protein is DNA-binding protein RFX2 (RFX2).